Reading from the N-terminus, the 538-residue chain is Guanine nucleotide-binding protein-like 3 (538 aa).

Over residues 1-45 (MKRPKLKKASKRMTCHKRYKIQKKVREHHRKLRKEAKKRGHKKPR) the composition is skewed to basic residues. Disordered regions lie at residues 1–57 (MKRP…APFK) and 69–126 (QQLE…NPKK). The segment at 2 to 46 (KRPKLKKASKRMTCHKRYKIQKKVREHHRKLRKEAKKRGHKKPRK) is basic. The stretch at 54 to 95 (APFKEALLREAELRKQQLEELKQQQKLDRQKEQERKRKLEVS) forms a coiled coil. A compositionally biased stretch (basic and acidic residues) spans 69 to 93 (QQLEELKQQQKLDRQKEQERKRKLE). Lys-79 carries the N6-acetyllysine modification. Residue Lys-91 forms a Glycyl lysine isopeptide (Lys-Gly) (interchain with G-Cter in SUMO2) linkage. A phosphoserine mark is found at Ser-95 and Ser-101. Residues 114–126 (RKKAKAGKQNPKK) are compositionally biased toward basic residues. In terms of domain architecture, CP-type G spans 129 to 307 (CQELKKVIEA…IIDSPCLIIS (179 aa)). 176 to 179 (NKSD) lines the GTP pocket. Residues Lys-177, Lys-248, Lys-262, and Lys-270 each participate in a glycyl lysine isopeptide (Lys-Gly) (interchain with G-Cter in SUMO2) cross-link. A GTP-binding site is contributed by 256–263 (GFPNVGKS). Residues 277 to 451 (VGISMGLTRS…HLTNRILFRS (175 aa)) are intermediate. 300-303 (DSPC) contributes to the GTP binding site. Residues 460–475 (DEKDIVEESPRQTEDK) show a composition bias toward basic and acidic residues. Residues 460–532 (DEKDIVEESP…RASQEDETYD (73 aa)) are acidic. Positions 460–538 (DEKDIVEESP…ETYDFTTDYI (79 aa)) are disordered. 3 positions are modified to phosphoserine: Ser-493, Ser-505, and Ser-518. Polar residues predominate over residues 506 to 518 (PEQSTAGKPSDGS).

This sequence belongs to the TRAFAC class YlqF/YawG GTPase family. Interacts with MDM2; this interaction stabilizes MDM2. Interaction with MDM2 occurs in the nucleoplasm and is triggered by a nucleolar release mechanism, such as mitosis-induced nucleolar disassembly. Indirectly interacts with TP53, via MDM2-binding. Interacts with TSC22D1 isoform 2. In terms of tissue distribution, expressed in the adult bone marrow population that is enriched in hematopoietic stem cells.

The protein resides in the nucleus. The protein localises to the nucleolus. Its function is as follows. May be required to maintain the proliferative capacity of stem cells. Stabilizes MDM2 by preventing its ubiquitination, and hence proteasomal degradation. The polypeptide is Guanine nucleotide-binding protein-like 3 (Gnl3) (Mus musculus (Mouse)).